The primary structure comprises 1745 residues: Collagen alpha-3(V) chain (1745 aa).

The N-terminal stretch at 1–29 (MGNRRDLGQPRAGLCLLLAALQLLPGTQA) is a signal peptide. The Laminin G-like domain occupies 62-224 (DRAFRIGQAS…QACERYLPDC (163 aa)). N-linked (GlcNAc...) asparagine glycosylation is found at Asn102 and Asn141. Positions 211 to 391 (QAAFQACERY…AVIEKGQQFE (181 aa)) are nonhelical region. 4 disordered regions span residues 230–304 (AATV…TPTP), 322–362 (RSLD…EYPS), 387–439 (GQQF…RGPP), and 476–1492 (SMKG…PAEL). A compositionally biased stretch (basic residues) spans 244–267 (PRRKGKGKGRKKGRGRKGKGRKKN). Ser349 carries an O-linked (Xyl...) (chondroitin sulfate) serine glycan. 2 Collagen-like domains span residues 391–440 (EGPP…GPPG) and 482–538 (GPVG…DGAR). Residues 392–1489 (GPPGAPGPQG…AGPPGPPGAP (1098 aa)) form a triple-helical region region. Pro residues predominate over residues 406–424 (SGPPGPPGFPGDPGPPGPA). Low complexity-rich tracts occupy residues 426–439 (LPGI…RGPP), 489–499 (RPGPVGLPGHP), and 597–619 (EPGP…PGVT). Over residues 724 to 733 (QGEKGEKGED) the composition is skewed to basic and acidic residues. Positions 765–792 (PKGQAGQAGEEGPPGSAGEKGKLGVPGL) are enriched in low complexity. Collagen-like domains are found at residues 824-877 (GQPG…QGPP), 905-950 (GFQG…GLPG), and 951-989 (LEGR…GDPG). Positions 967-979 (LGKEGPAGLRGFP) are enriched in low complexity. A compositionally biased stretch (gly residues) spans 1016 to 1025 (GPAGGIGLPG). 2 stretches are compositionally biased toward low complexity: residues 1116-1126 (ADGAQGRRGPP) and 1141-1152 (VGVIGPPGLQGL). A compositionally biased stretch (gly residues) spans 1190–1199 (GLPGGVGQPG). Residues 1213-1222 (PGPPGAPGIP) show a composition bias toward pro residues. Residues 1234–1243 (SGPSGAAGPP) show a composition bias toward low complexity. Residues 1318–1330 (MGREGREGEKGAK) are compositionally biased toward basic and acidic residues. Positions 1405 to 1416 (IGLIGLIGPPGE) are enriched in low complexity. Residues 1429-1443 (QGPPGPKGDPGPPGP) are compositionally biased toward pro residues. The region spanning 1430-1488 (GPPGPKGDPGPPGPIGSLGHPGPPGVAGPLGQKGSKGSPGSMGPRGDTGPAGPPGPPGA) is the Collagen-like 6 domain. Residues 1458-1479 (PLGQKGSKGSPGSMGPRGDTGP) show a composition bias toward low complexity. The 231-residue stretch at 1514-1744 (EEVLASLTSL…GFELGPVCFS (231 aa)) folds into the Fibrillar collagen NC1 domain. Disulfide bonds link Cys1585-Cys1742 and Cys1651-Cys1696.

Belongs to the fibrillar collagen family. As to quaternary structure, trimers of two alpha 1(V) and one alpha 2(V) chains in most tissues and trimers of one alpha 1(V), one alpha 2(V), and one alpha 3(V) chains in placenta. Prolines at the third position of the tripeptide repeating unit (G-X-Y) are hydroxylated in some or all of the chains. In terms of tissue distribution, detected in fibroblasts (at protein level). Detected in urine (at protein level).

Its subcellular location is the secreted. It is found in the extracellular space. It localises to the extracellular matrix. Functionally, type V collagen is a member of group I collagen (fibrillar forming collagen). It is a minor connective tissue component of nearly ubiquitous distribution. Type V collagen binds to DNA, heparan sulfate, thrombospondin, heparin, and insulin. This Homo sapiens (Human) protein is Collagen alpha-3(V) chain (COL5A3).